We begin with the raw amino-acid sequence, 165 residues long: Small histone ubiquitination factor 1 (165 aa).

Positions 1-17 are enriched in basic and acidic residues; sequence MSSRRNDYHYDGNDHQY. Positions 1-86 are disordered; sequence MSSRRNDYHY…STRASFGAAS (86 aa). 2 stretches are compositionally biased toward low complexity: residues 29–38 and 50–60; these read SFYESSYRSR and SSYDSPSSSTN. The segment covering 73-86 has biased composition (polar residues); the sequence is PSNNSTRASFGAAS.

In terms of assembly, component of the histone H2B ubiquitin ligase complex (HULC) composed of at least brl1, brl2, rhp6 and shf1.

It is found in the nucleus. It localises to the cytoplasm. Its subcellular location is the cytoskeleton. The protein localises to the microtubule organizing center. The protein resides in the spindle pole body. Functionally, component of the histone H2B ubiquitin ligase complex (HULC) which plays a role in transcription regulation by catalyzing the monoubiquitination of histone H2B to form H2BK123ub1. H2BK123ub1 gives a specific tag for epigenetic transcriptional activation and is also a prerequisite for H3K4me and H3K79me formation. This Schizosaccharomyces pombe (strain 972 / ATCC 24843) (Fission yeast) protein is Small histone ubiquitination factor 1 (shf1).